A 155-amino-acid polypeptide reads, in one-letter code: Ribosome maturation factor RimP (155 aa).

Belongs to the RimP family.

Its subcellular location is the cytoplasm. Functionally, required for maturation of 30S ribosomal subunits. This chain is Ribosome maturation factor RimP, found in Exiguobacterium sibiricum (strain DSM 17290 / CCUG 55495 / CIP 109462 / JCM 13490 / 255-15).